Reading from the N-terminus, the 206-residue chain is Bis(5'-adenosyl)-triphosphatase (206 aa).

The HIT domain maps to 3–115; that stretch reads KPIYFSKFLV…KINNVGDLIY (113 aa). Positions 96-100 match the Histidine triad motif motif; that stretch reads HLHTH. Residue histidine 98 is the Tele-AMP-histidine intermediate of the active site. Positions 143-164 are disordered; that stretch reads RQARKNNSTSATVDGDELSQGP.

Homodimer. Requires Mn(2+) as cofactor.

It is found in the cytoplasm. Its subcellular location is the nucleus. The protein localises to the mitochondrion. It carries out the reaction P(1),P(3)-bis(5'-adenosyl) triphosphate + H2O = AMP + ADP + 2 H(+). Functionally, cleaves A-5'-PPP-5'A to yield AMP and ADP. Can cleave all dinucleoside polyphosphates, provided the phosphate chain contains at least 3 phosphates and that 1 of the 2 bases composing the nucleotide is a purine. Is most effective on dinucleoside triphosphates. Negatively regulates intracellular dinucleoside polyphosphate levels, which elevate following heat shock. The polypeptide is Bis(5'-adenosyl)-triphosphatase (HNT2) (Saccharomyces cerevisiae (strain RM11-1a) (Baker's yeast)).